The following is a 641-amino-acid chain: Macrolide export ATP-binding/permease protein MacB (641 aa).

Residues 2–236 (IFLKNICKNI…LILKTMPKEK (235 aa)) form the ABC transporter domain. Position 34 to 41 (34 to 41 (GQSGSGKT)) interacts with ATP. The next 4 membrane-spanning stretches (helical) occupy residues 265-285 (ILTM…VALG), 519-539 (ACVA…IMLV), 571-591 (MICT…IFAF), and 604-624 (AYSV…FGFF).

This sequence belongs to the ABC transporter superfamily. Macrolide exporter (TC 3.A.1.122) family. In terms of assembly, homodimer.

Its subcellular location is the cell inner membrane. In terms of biological role, non-canonical ABC transporter that contains transmembrane domains (TMD), which form a pore in the inner membrane, and an ATP-binding domain (NBD), which is responsible for energy generation. Confers resistance against macrolides. In Campylobacter jejuni subsp. jejuni serotype O:2 (strain ATCC 700819 / NCTC 11168), this protein is Macrolide export ATP-binding/permease protein MacB.